The following is a 238-amino-acid chain: Probable transglycosylase SceD 1 (238 aa).

An N-terminal signal peptide occupies residues 1-27 (MKKTVVASTLAVGLGVTGFAAGNSADA). The segment covering 87-97 (TNAPAQETAEQ) has biased composition (polar residues). The disordered stretch occupies residues 87-161 (TNAPAQETAE…SEASEGSSVN (75 aa)). Low complexity predominate over residues 102–156 (EQPQQTEQASTEQPAQEAAPQTEETQQPQQEATTQTTSSSNESTSNESSSSEASE).

The protein belongs to the transglycosylase family. SceD subfamily.

The protein localises to the secreted. Is able to cleave peptidoglycan and affects clumping and separation of bacterial cells. This is Probable transglycosylase SceD 1 (sceD1) from Staphylococcus saprophyticus subsp. saprophyticus (strain ATCC 15305 / DSM 20229 / NCIMB 8711 / NCTC 7292 / S-41).